Consider the following 393-residue polypeptide: Seven-bladed beta-propeller protein Rv1057 (393 aa).

The tract at residues 208–230 (DGGRIGSRSRSRQKSSKPRGNQA) is disordered. The segment covering 214 to 224 (SRSRSRQKSSK) has biased composition (basic residues).

Functionally, may play an important role in host-pathogen interactions and in ESAT-6 secretion. This chain is Seven-bladed beta-propeller protein Rv1057, found in Mycobacterium tuberculosis (strain ATCC 25618 / H37Rv).